A 105-amino-acid polypeptide reads, in one-letter code: Nucleoid-associated protein cu1912 (105 aa).

The protein belongs to the YbaB/EbfC family. As to quaternary structure, homodimer.

The protein localises to the cytoplasm. Its subcellular location is the nucleoid. Its function is as follows. Binds to DNA and alters its conformation. May be involved in regulation of gene expression, nucleoid organization and DNA protection. This is Nucleoid-associated protein cu1912 from Corynebacterium urealyticum (strain ATCC 43042 / DSM 7109).